The sequence spans 75 residues: Exodeoxyribonuclease 7 small subunit (75 aa).

Belongs to the XseB family. As to quaternary structure, heterooligomer composed of large and small subunits.

Its subcellular location is the cytoplasm. The enzyme catalyses Exonucleolytic cleavage in either 5'- to 3'- or 3'- to 5'-direction to yield nucleoside 5'-phosphates.. In terms of biological role, bidirectionally degrades single-stranded DNA into large acid-insoluble oligonucleotides, which are then degraded further into small acid-soluble oligonucleotides. This Chlamydia abortus (strain DSM 27085 / S26/3) (Chlamydophila abortus) protein is Exodeoxyribonuclease 7 small subunit.